Reading from the N-terminus, the 258-residue chain is Ribosomal RNA small subunit methyltransferase A (258 aa).

Residues His-13, Leu-15, Gly-40, Glu-62, Asp-87, and Asn-108 each contribute to the S-adenosyl-L-methionine site.

The protein belongs to the class I-like SAM-binding methyltransferase superfamily. rRNA adenine N(6)-methyltransferase family. RsmA subfamily.

The protein localises to the cytoplasm. The catalysed reaction is adenosine(1518)/adenosine(1519) in 16S rRNA + 4 S-adenosyl-L-methionine = N(6)-dimethyladenosine(1518)/N(6)-dimethyladenosine(1519) in 16S rRNA + 4 S-adenosyl-L-homocysteine + 4 H(+). Functionally, specifically dimethylates two adjacent adenosines (A1518 and A1519) in the loop of a conserved hairpin near the 3'-end of 16S rRNA in the 30S particle. May play a critical role in biogenesis of 30S subunits. The chain is Ribosomal RNA small subunit methyltransferase A from Sulfurihydrogenibium sp. (strain YO3AOP1).